Here is a 772-residue protein sequence, read N- to C-terminus: A type blood N-acetyl-alpha-D-galactosamine deacetylase (772 aa).

An N-terminal signal peptide occupies residues 1–27 (MRNRRKAVSLLTGLLVTAQLFPTAALA). Substrate contacts are provided by serine 87 and histidine 123. Position 126 (aspartate 126) interacts with a divalent metal cation. The deacetylase activity stretch occupies residues 180–402 (WSKPTSDAER…WRIGYAENSF (223 aa)). Residue tyrosine 236 coordinates substrate. Histidine 278 lines the a divalent metal cation pocket. In terms of domain architecture, F5/8 type C spans 494-605 (SDDLEIAVVE…KDLVASGSDW (112 aa)). The tract at residues 502-765 (VENPYTLIPQ…VCVSPVVDFD (264 aa)) is CBM32 carbohydrate-binding domain. The interval 515-772 (TATATSVYGG…DFDYFSYVGE (258 aa)) is not required for activity on soluble substrates.

A divalent metal cation serves as cofactor.

It carries out the reaction an N-acetyl-alpha-D-galactosaminyl-(1-&gt;3)-[alpha-L-fucosyl-(1-&gt;2)]-beta-D-galactosyl derivative + H2O = an alpha-D-galactosaminyl-(1-&gt;3)-[alpha-L-fucosyl-(1-&gt;2)]-beta-D-galactosyl derivative + acetate. Inhibited by EDTA. Functionally, one of an enzyme pair that work together to convert the A antigen to the H antigen of the O blood type, which together release galactosamine. Catalyzes the first step in the conversion, generating the substrate for the subsequent enzyme (FpGalNase, AC P0DTR5). Works on many different A antigen subtypes. Glu-90 probably activates a nucleophilic water molecule to start the deacetylation reaction. The sequence is that of A type blood N-acetyl-alpha-D-galactosamine deacetylase from Flavonifractor plautii (Fusobacterium plautii).